The following is a 328-amino-acid chain: Peroxidase 71 (328 aa).

Positions Met1–Gly23 are cleaved as a signal peptide. 4 disulfides stabilise this stretch: Cys44/Cys120, Cys77/Cys82, Cys126/Cys324, and Cys204/Cys235. His75 serves as the catalytic Proton acceptor. Residues Asp76, Val79, Gly81, Asp83, and Ser85 each contribute to the Ca(2+) site. Pro167 is a binding site for substrate. Residue His197 participates in heme b binding. Thr198 contacts Ca(2+). Asn213 is a glycosylation site (N-linked (GlcNAc...) asparagine). Positions 248, 251, and 256 each coordinate Ca(2+). A glycan (N-linked (GlcNAc...) asparagine) is linked at Asn262.

Belongs to the peroxidase family. Classical plant (class III) peroxidase subfamily. Requires heme b as cofactor. Ca(2+) is required as a cofactor. As to expression, slightly expressed in roots.

The protein localises to the secreted. The catalysed reaction is 2 a phenolic donor + H2O2 = 2 a phenolic radical donor + 2 H2O. Functionally, removal of H(2)O(2), oxidation of toxic reductants, biosynthesis and degradation of lignin, suberization, auxin catabolism, response to environmental stresses such as wounding, pathogen attack and oxidative stress. These functions might be dependent on each isozyme/isoform in each plant tissue. This chain is Peroxidase 71 (PER71), found in Arabidopsis thaliana (Mouse-ear cress).